Here is a 366-residue protein sequence, read N- to C-terminus: DNA polymerase IV (366 aa).

Residues 6-197 (IIHVDMDYFY…LKVSKLWGIG (192 aa)) enclose the UmuC domain. Mg(2+)-binding residues include aspartate 10 and aspartate 114. Residue glutamate 115 is part of the active site.

Belongs to the DNA polymerase type-Y family. Monomer. The cofactor is Mg(2+).

It localises to the cytoplasm. It carries out the reaction DNA(n) + a 2'-deoxyribonucleoside 5'-triphosphate = DNA(n+1) + diphosphate. Functionally, poorly processive, error-prone DNA polymerase involved in untargeted mutagenesis. Copies undamaged DNA at stalled replication forks, which arise in vivo from mismatched or misaligned primer ends. These misaligned primers can be extended by PolIV. Exhibits no 3'-5' exonuclease (proofreading) activity. May be involved in translesional synthesis. This is DNA polymerase IV from Methanosarcina acetivorans (strain ATCC 35395 / DSM 2834 / JCM 12185 / C2A).